Reading from the N-terminus, the 300-residue chain is 17-beta-hydroxysteroid dehydrogenase 13 (300 aa).

The first 19 residues, 1–19, serve as a signal peptide directing secretion; sequence MNIILEILLLLITIIYSYL. Phosphoserine is present on S33. 40–67 is a binding site for NAD(+); that stretch reads LITGAGHGIGRQTTYEFAKRQSILVLWD. S172 lines the substrate pocket. The Proton acceptor role is filled by Y185. Residue K189 coordinates NAD(+).

Belongs to the short-chain dehydrogenases/reductases (SDR) family. Highly expressed in the liver. Also detected in ovary, bone marrow, kidney, brain, lung, skeletal muscle, bladder and testis.

It localises to the lipid droplet. The protein localises to the endoplasmic reticulum. Its subcellular location is the cytoplasm. The catalysed reaction is 17beta-estradiol + NAD(+) = estrone + NADH + H(+). The enzyme catalyses all-trans-retinol + NAD(+) = all-trans-retinal + NADH + H(+). It carries out the reaction all-trans-retinal + NAD(+) + H2O = all-trans-retinoate + NADH + 2 H(+). Plays a pivotal role in hepatic lipid metabolism. In vitro, it catalyzes the oxidation of a variety of lipid substrates, including 17beta-estradiol, retinol, retinal, and leukotriene B4. In terms of biological role, has retinol/retinal dehydrogenase activity in vitro. Functionally, does not have retinol/retinal dehydrogenase activity in vitro. This Homo sapiens (Human) protein is 17-beta-hydroxysteroid dehydrogenase 13.